The primary structure comprises 262 residues: Putative hydro-lyase Sca_2211 (262 aa).

It belongs to the D-glutamate cyclase family.

In Staphylococcus carnosus (strain TM300), this protein is Putative hydro-lyase Sca_2211.